A 147-amino-acid polypeptide reads, in one-letter code: Peptide methionine sulfoxide reductase MsrB 2 (147 aa).

In terms of domain architecture, MsrB spans 6–129; the sequence is TDEEVSKLTP…NSAALRFIPR (124 aa). Catalysis depends on Cys118, which acts as the Nucleophile.

The protein belongs to the MsrB Met sulfoxide reductase family.

The enzyme catalyses L-methionyl-[protein] + [thioredoxin]-disulfide + H2O = L-methionyl-(R)-S-oxide-[protein] + [thioredoxin]-dithiol. The polypeptide is Peptide methionine sulfoxide reductase MsrB 2 (msrB2) (Rhizobium meliloti (strain 1021) (Ensifer meliloti)).